A 219-amino-acid chain; its full sequence is Cytochrome b6 (219 aa).

A helical membrane pass occupies residues 32–52 (IFYCFGGIVLTAFIFQGASGF). A heme c-binding site is contributed by Cys-35. Positions 86 and 100 each coordinate heme b. The next 3 membrane-spanning stretches (helical) occupy residues 90-110 (SGCM…TGGF), 116-136 (LTWI…VTGY), and 190-210 (IHTF…FSLL). Heme b-binding residues include His-191 and His-206.

It belongs to the cytochrome b family. PetB subfamily. The 4 large subunits of the cytochrome b6-f complex are cytochrome b6, subunit IV (17 kDa polypeptide, PetD), cytochrome f and the Rieske protein, while the 4 small subunits are PetG, PetL, PetM and PetN. The complex functions as a dimer. The cofactor is heme b. Heme c serves as cofactor.

It is found in the plastid. The protein localises to the chloroplast thylakoid membrane. Component of the cytochrome b6-f complex, which mediates electron transfer between photosystem II (PSII) and photosystem I (PSI), cyclic electron flow around PSI, and state transitions. The protein is Cytochrome b6 of Heterocapsa triquetra (Dinoflagellate).